Consider the following 323-residue polypeptide: Ferrochelatase (323 aa).

Fe cation-binding residues include His196 and Glu277.

Belongs to the ferrochelatase family.

It is found in the cytoplasm. It catalyses the reaction heme b + 2 H(+) = protoporphyrin IX + Fe(2+). Its pathway is porphyrin-containing compound metabolism; protoheme biosynthesis; protoheme from protoporphyrin-IX: step 1/1. Its function is as follows. Catalyzes the ferrous insertion into protoporphyrin IX. The protein is Ferrochelatase of Haemophilus influenzae (strain PittEE).